The following is a 313-amino-acid chain: Ribosomal RNA small subunit methyltransferase H (313 aa).

S-adenosyl-L-methionine contacts are provided by residues 35–37 (GGH), D55, F79, D101, and Q108.

Belongs to the methyltransferase superfamily. RsmH family.

The protein localises to the cytoplasm. It catalyses the reaction cytidine(1402) in 16S rRNA + S-adenosyl-L-methionine = N(4)-methylcytidine(1402) in 16S rRNA + S-adenosyl-L-homocysteine + H(+). Functionally, specifically methylates the N4 position of cytidine in position 1402 (C1402) of 16S rRNA. The chain is Ribosomal RNA small subunit methyltransferase H from Escherichia coli O6:H1 (strain CFT073 / ATCC 700928 / UPEC).